Here is a 642-residue protein sequence, read N- to C-terminus: Threonine--tRNA ligase (642 aa).

The 61-residue stretch at 1–61 (MPIITLPDGS…TADSELAIIT (61 aa)) folds into the TGS domain. A catalytic region spans residues 243–534 (DHRKIGKQLD…LIEEYAGKFP (292 aa)). The Zn(2+) site is built by Cys334, His385, and His511.

Belongs to the class-II aminoacyl-tRNA synthetase family. In terms of assembly, homodimer. The cofactor is Zn(2+).

It is found in the cytoplasm. It carries out the reaction tRNA(Thr) + L-threonine + ATP = L-threonyl-tRNA(Thr) + AMP + diphosphate + H(+). Catalyzes the attachment of threonine to tRNA(Thr) in a two-step reaction: L-threonine is first activated by ATP to form Thr-AMP and then transferred to the acceptor end of tRNA(Thr). Also edits incorrectly charged L-seryl-tRNA(Thr). The protein is Threonine--tRNA ligase of Shewanella frigidimarina (strain NCIMB 400).